The chain runs to 176 residues: Peptide methionine sulfoxide reductase MsrA (176 aa).

The active site involves Cys-10.

It belongs to the MsrA Met sulfoxide reductase family.

The catalysed reaction is L-methionyl-[protein] + [thioredoxin]-disulfide + H2O = L-methionyl-(S)-S-oxide-[protein] + [thioredoxin]-dithiol. The enzyme catalyses [thioredoxin]-disulfide + L-methionine + H2O = L-methionine (S)-S-oxide + [thioredoxin]-dithiol. Functionally, has an important function as a repair enzyme for proteins that have been inactivated by oxidation. Catalyzes the reversible oxidation-reduction of methionine sulfoxide in proteins to methionine. This is Peptide methionine sulfoxide reductase MsrA from Sulfolobus acidocaldarius (strain ATCC 33909 / DSM 639 / JCM 8929 / NBRC 15157 / NCIMB 11770).